The sequence spans 1654 residues: Microtubule cross-linking factor 2 (1654 aa).

The interval 1–188 (METPAGESSA…VAASSVGSSR (188 aa)) is disordered. Positions 55-66 (GSATACGTASSA) are enriched in low complexity. Residues 102–113 (GTGPRPPPPPPS) show a composition bias toward pro residues. Residues 132 to 147 (LGLELALSSDAESAAG) show a composition bias toward low complexity. The required for association with Golgi apparatus membrane stretch occupies residues 209–238 (PGGLVRELEELRSENDYLKDEIEELRAEML). Coiled-coil stretches lie at residues 216 to 279 (LEEL…AERR), 308 to 349 (SMRL…LQTE), 448 to 546 (LKLV…YRSE), 816 to 843 (IKDL…ERQL), and 1079 to 1113 (SQEK…LQKA). The tract at residues 348–379 (TELDRPREHSLKKRGTRSLGKTDKKPTAQEDS) is disordered. The span at 1122-1145 (SDMEKQDNSWKEARSEKTHDKEGV) shows a compositional bias: basic and acidic residues. The segment at 1122 to 1146 (SDMEKQDNSWKEARSEKTHDKEGVS) is disordered. Residues Ser1165 and Ser1251 each carry the phosphoserine modification. The segment at 1406–1505 (LVSVRSKQIS…HSGSTESVWK (100 aa)) is KR-rich domain required for microtubules binding. Disordered regions lie at residues 1427–1450 (RPCC…LDST), 1537–1560 (PTTA…YHQP), and 1627–1654 (NTIR…AAPQ). The span at 1628–1638 (TIRHSPSKCRL) shows a compositional bias: basic residues.

It belongs to the MTCL family. In terms of assembly, interacts with CLASP2. Interacts with CLASP1. The C-terminal SOGA 25 kDa form occurs as a monomer. In terms of processing, proteolytically cleaved into a C-terminal SOGA 25 kDa form that is detected in plasma. Proteolytically cleaved in primary hepatocytes into a C-terminal SOGA 80 kDa form. Phosphorylated during mitosis in a CDK1-dependent manner. Expressed in liver (at protein level).

Its subcellular location is the secreted. It is found in the cytoplasm. The protein resides in the cytoskeleton. It localises to the golgi apparatus membrane. The protein localises to the midbody. Microtubule-associated factor that enables integration of the centrosomal and Golgi-associated microtubules on the Golgi membrane, supporting directional migration. Preferentially acts on the perinuclear microtubules accumulated around the Golgi. Associates with the Golgi membrane through the N-terminal coiled-coil region and directly binds microtubules through the C-terminal domain. Required for faithful chromosome segregation during mitosis. Regulates autophagy by playing a role in the reduction of glucose production in an adiponectin- and insulin-dependent manner. This chain is Microtubule cross-linking factor 2 (Mtcl2), found in Mus musculus (Mouse).